Reading from the N-terminus, the 186-residue chain is UPF0301 protein LHK_02881 (186 aa).

Belongs to the UPF0301 (AlgH) family.

This chain is UPF0301 protein LHK_02881, found in Laribacter hongkongensis (strain HLHK9).